The following is a 95-amino-acid chain: MRKYEMMVIARPDLDEAGLQALSDKIAELITSNGGTVESQDAWKKQRLAYEIKHLREGFYSVFNFTGEPRTANELNRVLKITDEVVRFLIVRPAE.

It belongs to the bacterial ribosomal protein bS6 family.

Functionally, binds together with bS18 to 16S ribosomal RNA. The sequence is that of Small ribosomal subunit protein bS6 from Symbiobacterium thermophilum (strain DSM 24528 / JCM 14929 / IAM 14863 / T).